The sequence spans 206 residues: Small ribosomal subunit protein uS4 (206 aa).

In terms of domain architecture, S4 RNA-binding spans 96–156; the sequence is GRLDNVVYRM…EKSKKQARIK (61 aa).

It belongs to the universal ribosomal protein uS4 family. Part of the 30S ribosomal subunit. Contacts protein S5. The interaction surface between S4 and S5 is involved in control of translational fidelity.

Its function is as follows. One of the primary rRNA binding proteins, it binds directly to 16S rRNA where it nucleates assembly of the body of the 30S subunit. With S5 and S12 plays an important role in translational accuracy. The chain is Small ribosomal subunit protein uS4 from Histophilus somni (strain 2336) (Haemophilus somnus).